The sequence spans 315 residues: Aspartate carbamoyltransferase catalytic subunit (315 aa).

2 residues coordinate carbamoyl phosphate: R65 and T66. Residue K93 coordinates L-aspartate. The carbamoyl phosphate site is built by R115, H143, and Q146. L-aspartate-binding residues include R176 and R231. Carbamoyl phosphate-binding residues include G272 and P273.

Belongs to the aspartate/ornithine carbamoyltransferase superfamily. ATCase family. In terms of assembly, heterododecamer (2C3:3R2) of six catalytic PyrB chains organized as two trimers (C3), and six regulatory PyrI chains organized as three dimers (R2).

It catalyses the reaction carbamoyl phosphate + L-aspartate = N-carbamoyl-L-aspartate + phosphate + H(+). The protein operates within pyrimidine metabolism; UMP biosynthesis via de novo pathway; (S)-dihydroorotate from bicarbonate: step 2/3. Catalyzes the condensation of carbamoyl phosphate and aspartate to form carbamoyl aspartate and inorganic phosphate, the committed step in the de novo pyrimidine nucleotide biosynthesis pathway. The chain is Aspartate carbamoyltransferase catalytic subunit from Hyphomonas neptunium (strain ATCC 15444).